The sequence spans 249 residues: Uridylate kinase (249 aa).

15-18 (KLSG) is a binding site for ATP. Residues 23-28 (GDEGFG) are involved in allosteric activation by GTP. Gly-57 lines the UMP pocket. Gly-58 and Arg-62 together coordinate ATP. UMP contacts are provided by residues Asp-77 and 138 to 145 (TGNPFFTT). Residues Thr-165, Tyr-171, and Asp-174 each coordinate ATP.

Belongs to the UMP kinase family. In terms of assembly, homohexamer.

The protein localises to the cytoplasm. The enzyme catalyses UMP + ATP = UDP + ADP. It functions in the pathway pyrimidine metabolism; CTP biosynthesis via de novo pathway; UDP from UMP (UMPK route): step 1/1. With respect to regulation, allosterically activated by GTP. Inhibited by UTP. In terms of biological role, catalyzes the reversible phosphorylation of UMP to UDP. In Pseudoalteromonas translucida (strain TAC 125), this protein is Uridylate kinase.